Reading from the N-terminus, the 271-residue chain is Formamidopyrimidine-DNA glycosylase (271 aa).

Proline 2 serves as the catalytic Schiff-base intermediate with DNA. Glutamate 3 functions as the Proton donor in the catalytic mechanism. The Proton donor; for beta-elimination activity role is filled by lysine 56. The DNA site is built by histidine 89, arginine 107, and lysine 151. An FPG-type zinc finger spans residues 236–270 (NVYGRAGLPCRQCGTPVRLLRQGQRSTYFCPHCQR). Residue arginine 260 is the Proton donor; for delta-elimination activity of the active site.

It belongs to the FPG family. In terms of assembly, monomer. The cofactor is Zn(2+).

The enzyme catalyses Hydrolysis of DNA containing ring-opened 7-methylguanine residues, releasing 2,6-diamino-4-hydroxy-5-(N-methyl)formamidopyrimidine.. The catalysed reaction is 2'-deoxyribonucleotide-(2'-deoxyribose 5'-phosphate)-2'-deoxyribonucleotide-DNA = a 3'-end 2'-deoxyribonucleotide-(2,3-dehydro-2,3-deoxyribose 5'-phosphate)-DNA + a 5'-end 5'-phospho-2'-deoxyribonucleoside-DNA + H(+). Its function is as follows. Involved in base excision repair of DNA damaged by oxidation or by mutagenic agents. Acts as a DNA glycosylase that recognizes and removes damaged bases. Has a preference for oxidized purines, such as 7,8-dihydro-8-oxoguanine (8-oxoG). Has AP (apurinic/apyrimidinic) lyase activity and introduces nicks in the DNA strand. Cleaves the DNA backbone by beta-delta elimination to generate a single-strand break at the site of the removed base with both 3'- and 5'-phosphates. This chain is Formamidopyrimidine-DNA glycosylase, found in Acidovorax sp. (strain JS42).